A 1306-amino-acid chain; its full sequence is MKLEINKFNYNDPIDGINVITMRPPRHSDKINKGKGPFKAFQVIKNIWIVPERYNFTNNTNDLNIPSEPIMEADAIYNPNYLNTPSEKDEFLQGVIKVLERIKSKPEGEKLLELISSSIPLPLVSNGALTLSDNETIAYQENNNIVSNLQANLVIYGPGPDIANNATYGLYSTPISNGEGTLSEVSFSPFYLKPFDESYGNYRSLVNIVNKFVKREFAPDPASTLMHELVHVTHNLYGISNRNFYYNFDTGKIETSRQQNSLIFEELLTFGGIDSKAISSLIIKKIIETAKNNYTTLISERLNTVTVENDLLKYIKNKIPVQGRLGNFKLDTAEFEKKLNTILFVLNESNLAQRFSILVRKHYLKERPIDPIYVNILDDNSYSTLEGFNISSQGSNDFQGQLLESSYFEKIESNALRAFIKICPRNGLLYNAIYRNSKNYLNNIDLEDKKTTSKTNVSYPCSLLNGCIEVENKDLFLISNKDSLNDINLSEEKIKPETTVFFKDKLPPQDITLSNYDFTEANSIPSISQQNILERNEELYEPIRNSLFEIKTIYVDKLTTFHFLEAQNIDESIDSSKIRVELTDSVDEALSNPNKVYSPFKNMSNTINSIETGITSTYIFYQWLRSIVKDFSDETGKIDVIDKSSDTLAIVPYIGPLLNIGNDIRHGDFVGAIELAGITALLEYVPEFTIPILVGLEVIGGELAREQVEAIVNNALDKRDQKWAEVYNITKAQWWGTIHLQINTRLAHTYKALSRQANAIKMNMEFQLANYKGNIDDKAKIKNAISETEILLNKSVEQAMKNTEKFMIKLSNSYLTKEMIPKVQDNLKNFDLETKKTLDKFIKEKEDILGTNLSSSLRRKVSIRLNKNIAFDINDIPFSEFDDLINQYKNEIEDYEVLNLGAEDGKIKDLSGTTSDINIGSDIELADGRENKAIKIKGSENSTIKIAMNKYLRFSATDNFSISFWIKHPKPTNLLNNGIEYTLVENFNQRGWKISIQDSKLIWYLRDHNNSIKIVTPDYIAFNGWNLITITNNRSKGSIVYVNGSKIEEKDISSIWNTEVDDPIIFRLKNNRDTQAFTLLDQFSIYRKELNQNEVVKLYNYYFNSNYIRDIWGNPLQYNKKYYLQTQDKPGKGLIREYWSSFGYDYVILSDSKTITFPNNIRYGALYNGSKVLIKNSKKLDGLVRNKDFIQLEIDGYNMGISADRFNEDTNYIGTTYGTTHDLTTDFEIIQRQEKYRNYCQLKTPYNIFHKSGLMSTETSKPTFHDYRDWVYSSAWYFQNYENLNLRKHTKTNWYFIPKDEGWDED.

H227 lines the Zn(2+) pocket. E228 is a catalytic residue. The Zn(2+) site is built by H231 and E266. Residues C423 and C467 are joined by a disulfide bond. The interval 462–889 (SLLNGCIEVE…EFDDLINQYK (428 aa)) is translocation domain (TD). The tract at residues 505–555 (KLPPQDITLSNYDFTEANSIPSISQQNILERNEELYEPIRNSLFEIKTIYV) is belt; not required for channel formation. The interval 890 to 1103 (NEIEDYEVLN…EVVKLYNYYF (214 aa)) is N-terminus of receptor binding domain (N-RBD). Residues 1104 to 1306 (NSNYIRDIWG…IPKDEGWDED (203 aa)) are C-terminus of receptor binding domain (C-RBD). The short motif at 1274–1277 (SAWY) is the Host ganglioside-binding motif element.

It belongs to the peptidase M27 family. Heterodimer; disulfide-linked heterodimer of a light chain (LC) and heavy chain (HC). The cofactor is Zn(2+). In terms of processing, an interchain disulfide bond is required for toxin stability in an artificial construct with the light chain and translocation domain; which of Cys-461 or Cys-467 forms the disulfide bond with Cys-423 in vivo is unknown.

It localises to the secreted. The protein localises to the host cytoplasm. The protein resides in the host cytosol. Its subcellular location is the host synapse. It is found in the host presynaptic cell membrane. It localises to the host cytoplasmic vesicle. The protein localises to the host secretory vesicle. The protein resides in the host synaptic vesicle membrane. The enzyme catalyses Limited hydrolysis of proteins of the neuroexocytosis apparatus, synaptobrevins, SNAP25 or syntaxin. No detected action on small molecule substrates.. Its activity is regulated as follows. VAMP2 cleavage inhibited by EDTA. In terms of biological role, botulinum toxin causes flaccid paralysis by inhibiting neurotransmitter (acetylcholine) release from the presynaptic membranes of nerve terminals of eukaryotic host skeletal and autonomic nervous system, with frequent heart or respiratory failure. Precursor of botulinum neurotoxin X which has 2 coreceptors; complex polysialylated gangliosides found on neural tissue and specific membrane-anchored proteins found in synaptic vesicles. Receptor proteins are exposed on host presynaptic cell membrane during neurotransmitter release, when the toxin heavy chain (HC) binds to them. Upon synaptic vesicle recycling the toxin is taken up via the endocytic pathway. When the pH of the toxin-containing endosome drops a structural rearrangement occurs so that the N-terminus of HC forms pores that allows the light chain (LC) to translocate into the cytosol. Once in the cytosol the disulfide bond linking the 2 subunits is reduced and LC cleaves its target protein on synaptic vesicles, preventing their fusion with the cytoplasmic membrane and thus neurotransmitter release. Artificially assembled BoNT/X cleaves synaptobrevin-2/VAMP2 and VAMP4 in cultured rat neurons and causes flaccid paralysis in mice. Functionally, has proteolytic activity. After translocation into the eukaryotic host cytosol, LC hydrolyzes the '66-Arg-|-Ala-67' bond in synaptobrevin-2/VAMP2, and the equivalent bonds in 'Arg-|-Ala' bonds in VAMP1 and VAMP3, thus blocking neurotransmitter release. Has a wider target range than most BoNTs, as it also cleaves the '87-Arg-|-Ser-89' bond in VAMP4, the '40-Arg-|-Ser-41' bond in VAMP5 and the '173-Lys-|-Ser-174' bond in YKT6; whether these are physiologically relevant substrates is unknown. BoNT/X is 10-fold more efficient than BoNT/B and 40-fold more efficient than TeTX on an artificial human VAMP1 substrate. Responsible for epithelial cell transcytosis, host nerve cell targeting and translocation of light chain (LC) into host cytosol. Composed of 3 subdomains; the translocation domain (TD), and N-terminus and C-terminus of the receptor-binding domain (RBD). The RBD is responsible for the adherence of the toxin to the cell surface. It simultaneously recognizes 2 coreceptors; polysialated gangliosides and an unknown receptor protein in close proximity on host synaptic vesicles. The N-terminus of the TD wraps an extended belt around the perimeter of the LC, protecting Zn(2+) in the active site. The TD inserts into synaptic vesicle membrane to allow translocation into the host cytosol. Protein ligation of the RBD to the rest of the toxin (creates an artificial whole toxin) greatly increases VAMP2 degradation, and thus neuron uptake. The sequence is that of Botulinum neurotoxin type X from Clostridium botulinum.